The chain runs to 529 residues: Arginine--tRNA ligase (529 aa).

The short motif at 113–123 (ANPTGPLHIGH) is the 'HIGH' region element.

This sequence belongs to the class-I aminoacyl-tRNA synthetase family. As to quaternary structure, monomer.

Its subcellular location is the cytoplasm. The catalysed reaction is tRNA(Arg) + L-arginine + ATP = L-arginyl-tRNA(Arg) + AMP + diphosphate. The sequence is that of Arginine--tRNA ligase from Campylobacter curvus (strain 525.92).